The sequence spans 483 residues: uncharacterized protein (483 aa).

The TRAM domain maps to Arg-11–Glu-71. [4Fe-4S] cluster contacts are provided by Cys-84, Cys-90, Cys-93, and Cys-187. S-adenosyl-L-methionine contacts are provided by Gln-312, Tyr-341, Glu-362, and Asp-412. Cys-439 functions as the Nucleophile in the catalytic mechanism.

It belongs to the class I-like SAM-binding methyltransferase superfamily. RNA M5U methyltransferase family.

This is an uncharacterized protein from Chlorobaculum tepidum (strain ATCC 49652 / DSM 12025 / NBRC 103806 / TLS) (Chlorobium tepidum).